The sequence spans 366 residues: MGYAAVPPVERGSCSAGANNRDITFDFVKGILIILVVLGHLLQLVIYRNTDNFWLSPYFKAIYMFHMPLFMAISGYLASGTILRTSFCRAVGDRAVQLLIPMLFWCALIETAKLAAFFHFSGVTAGLLDFSRELVGTYWFLWAVLASFLLTKLFAAFNLLSKWILCASAIVIALMPITLSIVPLLRYTYPFFCLGFLFAQTIEEQANTMLRHKSLLMFSCWAVACLCFLDWGRDTYAYNNLVLVHDAQSAKQVLLMFTGSAAAAAVAAQSLFHCWRVLCSTRLARLVAVELGQSTLLLYLVQGAVFRLTDLIQFGELWDGKTRIVVASAIGAAIFGAATAVLWIVNDLGYVSRIIVGAPRRLKRSS.

The next 9 helical transmembrane spans lie at 27–47 (FVKGILIILVVLGHLLQLVIY), 62–82 (IYMFHMPLFMAISGYLASGTI), 98–118 (LLIPMLFWCALIETAKLAAFF), 140–160 (FLWAVLASFLLTKLFAAFNLL), 164–184 (ILCASAIVIALMPITLSIVPL), 212–232 (HKSLLMFSCWAVACLCFLDWG), 253–273 (VLLMFTGSAAAAAVAAQSLFH), 286–306 (LVAVELGQSTLLLYLVQGAVF), and 324–344 (IVVASAIGAAIFGAATAVLWI).

This sequence belongs to the acyltransferase 3 family.

It is found in the cell membrane. Thought to be an acetyltransferase that modifies the fucose of the nod factor. This is Nodulation protein NolL (nolL) from Sinorhizobium fredii (strain NBRC 101917 / NGR234).